A 524-amino-acid polypeptide reads, in one-letter code: Cytokinin dehydrogenase 7 (524 aa).

One can recognise an FAD-binding PCMH-type domain in the interval 58–238 (NCVKPLAVVR…TRARVLLQPA (181 aa)). FAD is bound by residues alanine 91, glycine 93, asparagine 94, and glycine 95. Position 96 is a pros-8alpha-FAD histidine (histidine 96). FAD contacts are provided by serine 97, glutamine 101, aspartate 162, threonine 167, serine 173, valine 177, isoleucine 228, tyrosine 479, serine 514, and glutamine 517.

It belongs to the oxygen-dependent FAD-linked oxidoreductase family. It depends on FAD as a cofactor. As to expression, expressed in the vasculature of roots, hypocotyls, cotyledons and leaves of young seedlings. In flowers, expressed in the transmitting tissue of the gynoecium prior to pollination. Expressed in the mature embryo sac with maximum activity in the egg cell and the synergids.

It is found in the cytoplasm. Its subcellular location is the cytosol. The enzyme catalyses N(6)-dimethylallyladenine + A + H2O = 3-methyl-2-butenal + adenine + AH2. Functionally, catalyzes the oxidation of cytokinins, a family of N(6)-substituted adenine derivatives that are plant hormones, where the substituent is an isopentenyl group. Catalyzes in vitro the oxidation of various types of cytokinin nucleotides that are known as direct products of cytokinin biosynthesis. This is Cytokinin dehydrogenase 7 (CKX7) from Arabidopsis thaliana (Mouse-ear cress).